The chain runs to 178 residues: SsrA-binding protein (178 aa).

The disordered stretch occupies residues 1-28; it reads MAKKSTPVDSGRSKGKKASAPRGGGPAV.

This sequence belongs to the SmpB family.

The protein resides in the cytoplasm. In terms of biological role, required for rescue of stalled ribosomes mediated by trans-translation. Binds to transfer-messenger RNA (tmRNA), required for stable association of tmRNA with ribosomes. tmRNA and SmpB together mimic tRNA shape, replacing the anticodon stem-loop with SmpB. tmRNA is encoded by the ssrA gene; the 2 termini fold to resemble tRNA(Ala) and it encodes a 'tag peptide', a short internal open reading frame. During trans-translation Ala-aminoacylated tmRNA acts like a tRNA, entering the A-site of stalled ribosomes, displacing the stalled mRNA. The ribosome then switches to translate the ORF on the tmRNA; the nascent peptide is terminated with the 'tag peptide' encoded by the tmRNA and targeted for degradation. The ribosome is freed to recommence translation, which seems to be the essential function of trans-translation. The sequence is that of SsrA-binding protein from Corynebacterium urealyticum (strain ATCC 43042 / DSM 7109).